We begin with the raw amino-acid sequence, 215 residues long: Probable transaldolase (215 aa).

Residue K83 is the Schiff-base intermediate with substrate of the active site.

The protein belongs to the transaldolase family. Type 3B subfamily.

The protein resides in the cytoplasm. It carries out the reaction D-sedoheptulose 7-phosphate + D-glyceraldehyde 3-phosphate = D-erythrose 4-phosphate + beta-D-fructose 6-phosphate. Its pathway is carbohydrate degradation; pentose phosphate pathway; D-glyceraldehyde 3-phosphate and beta-D-fructose 6-phosphate from D-ribose 5-phosphate and D-xylulose 5-phosphate (non-oxidative stage): step 2/3. Functionally, transaldolase is important for the balance of metabolites in the pentose-phosphate pathway. This is Probable transaldolase from Moorella thermoacetica (strain ATCC 39073 / JCM 9320).